Consider the following 1308-residue polypeptide: Receptor tyrosine-protein kinase erbB-4 (1308 aa).

The N-terminal stretch at 1 to 25 (MKPATGLWVWVSLLVAAGTVQPSDS) is a signal peptide. Topologically, residues 26–651 (QSVCAGTENK…STLPQHARTP (626 aa)) are extracellular. A disulfide bridge connects residues cysteine 29 and cysteine 56. 3 N-linked (GlcNAc...) asparagine glycosylation sites follow: asparagine 138, asparagine 174, and asparagine 181. 12 cysteine pairs are disulfide-bonded: cysteine 156–cysteine 186, cysteine 189–cysteine 197, cysteine 193–cysteine 205, cysteine 213–cysteine 221, cysteine 217–cysteine 229, cysteine 230–cysteine 238, cysteine 234–cysteine 246, cysteine 249–cysteine 258, cysteine 262–cysteine 289, cysteine 293–cysteine 304, cysteine 308–cysteine 323, and cysteine 326–cysteine 330. A glycan (N-linked (GlcNAc...) asparagine) is linked at asparagine 253. Residues asparagine 358, asparagine 410, asparagine 473, and asparagine 495 are each glycosylated (N-linked (GlcNAc...) asparagine). Cystine bridges form between cysteine 503-cysteine 512, cysteine 507-cysteine 520, cysteine 523-cysteine 532, cysteine 536-cysteine 552, cysteine 555-cysteine 569, cysteine 559-cysteine 577, cysteine 580-cysteine 589, cysteine 593-cysteine 614, cysteine 617-cysteine 625, and cysteine 621-cysteine 633. The N-linked (GlcNAc...) asparagine glycan is linked to asparagine 548. Asparagine 576 is a glycosylation site (N-linked (GlcNAc...) asparagine). The N-linked (GlcNAc...) asparagine glycan is linked to asparagine 620. A helical transmembrane segment spans residues 652–675 (LIAAGVIGGLFILVIVGLTFAVYV). A Nuclear localization signal motif is present at residues 676-684 (RRKSIKKKR). Residues 676–1308 (RRKSIKKKRA…PPYRHRNTVV (633 aa)) are Cytoplasmic-facing. The Protein kinase domain occupies 718–985 (LKRVKVLGSG…RMARDPQRYL (268 aa)). ATP is bound by residues 724 to 732 (LGSGAFGTV), lysine 751, 797 to 799 (QLM), and 843 to 848 (DLAARN). The active-site Proton acceptor is aspartate 843. Tyrosine 875, tyrosine 1035, tyrosine 1056, tyrosine 1150, tyrosine 1162, tyrosine 1188, tyrosine 1202, tyrosine 1242, tyrosine 1258, and tyrosine 1284 each carry phosphotyrosine; by autocatalysis. 2 short sequence motifs (PPxY motif) span residues 1032-1035 (PPIY) and 1053-1056 (PPAY). Positions 1117–1150 (PHVQEDSSTQRYSADPTVFAPERSPRGELDEEGY) are disordered. A PPxY motif 3 motif is present at residues 1298-1301 (PPPY). A PDZ-binding motif is present at residues 1306–1308 (TVV).

The protein belongs to the protein kinase superfamily. Tyr protein kinase family. EGF receptor subfamily. As to quaternary structure, monomer in the absence of bound ligand. Homodimer or heterodimer with another ERBB family member upon ligand binding, thus forming heterotetramers. Interacts with EGFR and ERBB2. Interacts with CBFA2T3. Interacts with DLG2 (via its PDZ domain), DLG3 (via its PDZ domain), DLG4 (via its PDZ domain) and SNTB2 (via its PDZ domain). Interacts with MUC1. Interacts (via its PPxy motifs) with WWOX. Interacts (via the PPxY motif 3 of isoform JM-A CYT-2) with YAP1 (via the WW domain 1 of isoform 1). Interacts (isoform JM-A CYT-1 and isoform JM-B CYT-1) with WWP1. Interacts (via its intracellular domain) with TRIM28. Interacts (via the intracellular domains of both CYT-1 and CYT-2 isoforms) with KAP1; the interaction does not phosphorylate KAP1 but represses ERBB4-mediated transcriptional activity. Interacts with PRPU, DDX23, MATR3, RBM15, ILF3, KAP1, U5S1, U2SURP, ITCH, HNRNPU, AP2A1, NULC, LEO1, WWP2, IGHG1, HXK1, GRB7 and SRRT. Interacts (phosphorylated isoform JM-A CYT-1 and isoform JM-B CYT-1) with PIK3R1. Interacts with SHC1. Interacts with GRB2. Interacts (soluble intracellular domain) with STAT5A. Interacts (soluble intracellular domain) with BCL2. Interacts (phosphorylated) with STAT1. In terms of processing, isoform JM-A CYT-1 and isoform JM-A CYT-2 are processed by ADAM17. Proteolytic processing in response to ligand or 12-O-tetradecanoylphorbol-13-acetate stimulation results in the production of 120 kDa soluble receptor forms and intermediate membrane-anchored 80 kDa fragments (m80HER4), which are further processed by a presenilin-dependent gamma-secretase to release a cytoplasmic intracellular domain (E4ICD; E4ICD1/s80Cyt1 or E4ICD2/s80Cyt2, depending on the isoform). Membrane-anchored 80 kDa fragments of the processed isoform JM-A CYT-1 are more readily degraded by the proteasome than fragments of isoform JM-A CYT-2, suggesting a prevalence of E4ICD2 over E4ICD1. Isoform JM-B CYT-1 and isoform JM-B CYT-2 lack the ADAM17 cleavage site and are not processed by ADAM17, precluding further processing by gamma-secretase. Post-translationally, autophosphorylated on tyrosine residues in response to ligand binding. Autophosphorylation occurs in trans, i.e. one subunit of the dimeric receptor phosphorylates tyrosine residues on the other subunit. Ligands trigger phosphorylation at specific tyrosine residues, thereby creating binding sites for scaffold proteins and effectors. Constitutively phosphorylated at a basal level when overexpressed in heterologous systems; ligand binding leads to increased phosphorylation. Phosphorylation at Tyr-1035 is important for interaction with STAT1. Phosphorylation at Tyr-1056 is important for interaction with PIK3R1. Phosphorylation at Tyr-1242 is important for interaction with SHC1. Phosphorylation at Tyr-1188 may also contribute to the interaction with SHC1. Isoform JM-A CYT-2 is constitutively phosphorylated on tyrosine residues in a ligand-independent manner. E4ICD2 but not E4ICD1 is phosphorylated on tyrosine residues. Ubiquitinated. During mitosis, the ERBB4 intracellular domain is ubiquitinated by the APC/C complex and targeted to proteasomal degradation. Isoform JM-A CYT-1 and isoform JM-B CYT-1 are ubiquitinated by WWP1. The ERBB4 intracellular domain (E4ICD1) is ubiquitinated, and this involves NEDD4. Expressed at highest levels in brain, heart, kidney, in addition to skeletal muscle, parathyroid, cerebellum, pituitary, spleen, testis and breast. Lower levels in thymus, lung, salivary gland, and pancreas. Isoform JM-A CYT-1 and isoform JM-B CYT-1 are expressed in cerebellum, but only the isoform JM-B is expressed in the heart.

It localises to the cell membrane. It is found in the nucleus. Its subcellular location is the mitochondrion. It catalyses the reaction L-tyrosyl-[protein] + ATP = O-phospho-L-tyrosyl-[protein] + ADP + H(+). With respect to regulation, binding of a cognate ligand leads to dimerization and activation by autophosphorylation on tyrosine residues. In vitro kinase activity is increased by Mg(2+). Inhibited by PD153035, lapatinib, gefitinib (iressa, ZD1839), AG1478 and BIBX1382BS. In terms of biological role, tyrosine-protein kinase that plays an essential role as cell surface receptor for neuregulins and EGF family members and regulates development of the heart, the central nervous system and the mammary gland, gene transcription, cell proliferation, differentiation, migration and apoptosis. Required for normal cardiac muscle differentiation during embryonic development, and for postnatal cardiomyocyte proliferation. Required for normal development of the embryonic central nervous system, especially for normal neural crest cell migration and normal axon guidance. Required for mammary gland differentiation, induction of milk proteins and lactation. Acts as cell-surface receptor for the neuregulins NRG1, NRG2, NRG3 and NRG4 and the EGF family members BTC, EREG and HBEGF. Ligand binding triggers receptor dimerization and autophosphorylation at specific tyrosine residues that then serve as binding sites for scaffold proteins and effectors. Ligand specificity and signaling is modulated by alternative splicing, proteolytic processing, and by the formation of heterodimers with other ERBB family members, thereby creating multiple combinations of intracellular phosphotyrosines that trigger ligand- and context-specific cellular responses. Mediates phosphorylation of SHC1 and activation of the MAP kinases MAPK1/ERK2 and MAPK3/ERK1. Isoform JM-A CYT-1 and isoform JM-B CYT-1 phosphorylate PIK3R1, leading to the activation of phosphatidylinositol 3-kinase and AKT1 and protect cells against apoptosis. Isoform JM-A CYT-1 and isoform JM-B CYT-1 mediate reorganization of the actin cytoskeleton and promote cell migration in response to NRG1. Isoform JM-A CYT-2 and isoform JM-B CYT-2 lack the phosphotyrosine that mediates interaction with PIK3R1, and hence do not phosphorylate PIK3R1, do not protect cells against apoptosis, and do not promote reorganization of the actin cytoskeleton and cell migration. Proteolytic processing of isoform JM-A CYT-1 and isoform JM-A CYT-2 gives rise to the corresponding soluble intracellular domains (4ICD) that translocate to the nucleus, promote nuclear import of STAT5A, activation of STAT5A, mammary epithelium differentiation, cell proliferation and activation of gene expression. The ERBB4 soluble intracellular domains (4ICD) colocalize with STAT5A at the CSN2 promoter to regulate transcription of milk proteins during lactation. The ERBB4 soluble intracellular domains can also translocate to mitochondria and promote apoptosis. This chain is Receptor tyrosine-protein kinase erbB-4 (ERBB4), found in Homo sapiens (Human).